A 230-amino-acid polypeptide reads, in one-letter code: Cytidylate kinase (230 aa).

Residue 17 to 25 (GPTASGKGT) coordinates ATP.

This sequence belongs to the cytidylate kinase family. Type 1 subfamily.

The protein resides in the cytoplasm. It carries out the reaction CMP + ATP = CDP + ADP. The catalysed reaction is dCMP + ATP = dCDP + ADP. This chain is Cytidylate kinase, found in Ralstonia nicotianae (strain ATCC BAA-1114 / GMI1000) (Ralstonia solanacearum).